The sequence spans 1574 residues: Multiple epidermal growth factor-like domains protein 6 (1574 aa).

The first 27 residues, 1 to 27 (MPVRAEARAAWRVVALALLLLPAMPAA), serve as a signal peptide directing secretion. Positions 40–122 (MPHVCAEQKL…QKPGQEGCLS (83 aa)) constitute an EMI domain. Cystine bridges form between Cys-44–Cys-108, Cys-74–Cys-80, Cys-107–Cys-120, Cys-127–Cys-138, Cys-134–Cys-147, Cys-149–Cys-162, Cys-168–Cys-179, Cys-175–Cys-188, Cys-190–Cys-203, Cys-209–Cys-220, Cys-216–Cys-230, Cys-232–Cys-245, Cys-251–Cys-262, Cys-258–Cys-271, Cys-273–Cys-286, Cys-292–Cys-303, Cys-299–Cys-312, Cys-314–Cys-327, Cys-338–Cys-349, Cys-345–Cys-358, Cys-360–Cys-373, Cys-379–Cys-389, Cys-385–Cys-398, Cys-400–Cys-411, Cys-419–Cys-430, Cys-426–Cys-439, Cys-441–Cys-454, Cys-524–Cys-537, Cys-531–Cys-544, Cys-546–Cys-555, Cys-568–Cys-580, Cys-574–Cys-587, Cys-589–Cys-598, Cys-611–Cys-623, Cys-617–Cys-630, Cys-632–Cys-641, Cys-654–Cys-668, Cys-660–Cys-675, Cys-677–Cys-686, Cys-699–Cys-711, Cys-705–Cys-718, Cys-722–Cys-731, Cys-744–Cys-755, Cys-750–Cys-762, Cys-764–Cys-773, Cys-786–Cys-799, Cys-793–Cys-806, Cys-808–Cys-817, Cys-830–Cys-842, Cys-836–Cys-849, Cys-851–Cys-860, Cys-873–Cys-886, Cys-879–Cys-893, Cys-895–Cys-904, Cys-917–Cys-929, Cys-923–Cys-936, Cys-938–Cys-947, Cys-960–Cys-972, Cys-966–Cys-979, Cys-981–Cys-990, Cys-1003–Cys-1015, Cys-1009–Cys-1022, Cys-1024–Cys-1033, Cys-1046–Cys-1058, Cys-1052–Cys-1065, Cys-1067–Cys-1076, Cys-1089–Cys-1101, Cys-1095–Cys-1108, Cys-1110–Cys-1119, Cys-1132–Cys-1144, Cys-1138–Cys-1151, Cys-1153–Cys-1162, Cys-1175–Cys-1187, Cys-1181–Cys-1194, Cys-1196–Cys-1205, Cys-1218–Cys-1231, Cys-1224–Cys-1238, Cys-1240–Cys-1249, Cys-1262–Cys-1274, Cys-1268–Cys-1281, Cys-1283–Cys-1292, Cys-1305–Cys-1317, Cys-1311–Cys-1324, Cys-1326–Cys-1335, Cys-1348–Cys-1360, Cys-1354–Cys-1367, Cys-1369–Cys-1378, Cys-1391–Cys-1403, Cys-1397–Cys-1410, Cys-1412–Cys-1421, Cys-1434–Cys-1446, Cys-1440–Cys-1453, Cys-1455–Cys-1464, Cys-1477–Cys-1489, Cys-1483–Cys-1496, Cys-1498–Cys-1507, Cys-1520–Cys-1532, Cys-1526–Cys-1539, and Cys-1541–Cys-1550. Residues 123–163 (DVDECASANGGCEGPCCNTVGGFYCRCPPGYQLQGDGKTCQ) enclose the EGF-like 1; calcium-binding domain. Residues 164–204 (DVDECRAHNGGCQHRCVNTPGSYLCECKPGFRLHTDGRTCL) enclose the EGF-like 2; calcium-binding domain. EGF-like domains are found at residues 205–246 (AISS…RRCV) and 247–287 (RRSP…KTCE). One can recognise an EGF-like 5; calcium-binding domain in the interval 288 to 328 (DVDECALGLAQCAHGCLNTQGSFKCVCHAGYELGADGRQCY). EGF-like domains are found at residues 334-374 (IVNS…KTCI) and 375-412 (DIDDCANSPCCQQACANTPGGYECSCFAGYRLNTDGCG). The 41-residue stretch at 415–455 (DVDECASGHGGCEHHCSNLAGSFQCFCEAGYRLDEDRRGCT) folds into the EGF-like 8; calcium-binding domain. 24 EGF-like domains span residues 520–556 (FGHDCSLTCDDCRNGGTCFPGQDGCDCPEGWTGIICN), 564–599 (FGKNCSSPCTCQNGGTCDPVLGACRCPPGVSGAHCE), 607–642 (YGKHCRKKCHCANRGRCHRLYGACLCDPGLYGRFCH), 650–687 (FGPGCSEDCLCEQSHTRSCNPKDGSCSCKAGFQGERCQ), 695–732 (FGPGCRHRCTCQPGVACDPVSGECRTQCPPGYQGEDCG), 740–774 (FGVNCSGSCSCVGAPCHRVTGECLCPPGKTGEDCG), 782–818 (WGLGCQEICPACEHGASCNPETGTCLCLPGFVGSRCQ), 826–861 (YGTGCQIRCACANDGHCDPTTGRCSCAPGWTGLSCQ), 869–905 (WGPDCIHPCNCSAGHGNCDAVSGLCLCEAGYEGPRCE), 913–948 (YGPSCEQKCRCEHGAACDHVSGACTCPAGWRGSFCE), 956–991 (FGLDCDSACNCSAGAPCDAVTGSCICPAGRWGPRCA), 999–1034 (FGLNCSQICTCFNGASCDSVTGQCHCAPGWMGPTCL), 1042–1077 (YGKNCQHSCLCRNGGRCDPILGQCTCPEGWTGLACE), 1085–1120 (YAAGCQLNCSCLHGGICDRLTGHCLCPAGWTGDKCQ), 1128–1163 (FGVHCEEHCACRKGASCHHVTGACFCPPGWRGPHCE), 1171–1206 (FGEACAQRCLCPTNASCHHVTGECRCPPGFTGLSCE), 1214–1250 (FGKDCEHLCQCPGETWACDPASGVCTCAAGYHGTGCL), 1258–1293 (YGPGCEHICKCLNGGTCDPATGACYCPAGFLGADCS), 1301–1336 (FGPSCAHVCACRQGAACDPVSGACICSPGKTGVRCE), 1344–1379 (FGKGCELKCACRNGGLCHATNGSCSCPLGWMGPHCE), 1387–1422 (YGAACLLECFCQNNGSCEPTTGACLCGPGFYGQACE), 1430–1465 (HGPGCQRVCECQQGAPCDPVSGQCLCPAGFHGQFCE), 1473–1508 (FGDGCLQQCNCHTGVPCDPISGLCLCPPGRTGAACD), and 1516–1551 (FGPGCALRCDCGGGADCDPISGQCHCVDSYMGPTCR). A compositionally biased stretch (polar residues) spans 1555-1568 (TQISSSRPAPQHPS). The disordered stretch occupies residues 1555–1574 (TQISSSRPAPQHPSSRAMKH).

Expressed in lung.

Its subcellular location is the secreted. The chain is Multiple epidermal growth factor-like domains protein 6 (Megf6) from Rattus norvegicus (Rat).